The sequence spans 427 residues: Actin-related protein 3 (427 aa).

The protein belongs to the actin family. ARP3 subfamily. In terms of assembly, component of the Arp2/3 complex composed of arp2, act2, arc1/p41-ARC, arc2/p34-ARC, arc3/p21-ARC, arc4/p20-ARC and arc5/p16-ARC.

Its subcellular location is the cytoplasm. It localises to the cytoskeleton. The protein localises to the actin patch. In terms of biological role, functions as ATP-binding component of the Arp2/3 complex which is involved in regulation of actin polymerization and together with an activating nucleation-promoting factor (NPF) mediates the formation of branched actin networks. Seems to contact the pointed end of the daughter actin filament. May be involved in cytokinesis. The chain is Actin-related protein 3 (act2) from Schizosaccharomyces pombe (strain 972 / ATCC 24843) (Fission yeast).